Reading from the N-terminus, the 380-residue chain is Cytochrome b (380 aa).

Helical transmembrane passes span 34–54 (FGSL…LLAM), 78–99 (WLIR…YLHI), 114–134 (WNVG…GYVL), and 179–199 (FFAL…VHLT). Residues His84 and His98 each coordinate heme b. His183 and His197 together coordinate heme b. Residue His202 coordinates a ubiquinone. 4 helical membrane passes run 227–247 (IKDI…ALFS), 289–309 (LGGV…PLLH), 321–341 (LSQI…WIGS), and 348–368 (FIII…VLFP).

It belongs to the cytochrome b family. In terms of assembly, the cytochrome bc1 complex contains 11 subunits: 3 respiratory subunits (MT-CYB, CYC1 and UQCRFS1), 2 core proteins (UQCRC1 and UQCRC2) and 6 low-molecular weight proteins (UQCRH/QCR6, UQCRB/QCR7, UQCRQ/QCR8, UQCR10/QCR9, UQCR11/QCR10 and a cleavage product of UQCRFS1). This cytochrome bc1 complex then forms a dimer. The cofactor is heme b.

The protein resides in the mitochondrion inner membrane. Functionally, component of the ubiquinol-cytochrome c reductase complex (complex III or cytochrome b-c1 complex) that is part of the mitochondrial respiratory chain. The b-c1 complex mediates electron transfer from ubiquinol to cytochrome c. Contributes to the generation of a proton gradient across the mitochondrial membrane that is then used for ATP synthesis. This chain is Cytochrome b (MT-CYB), found in Vireo olivaceus (Red-eyed vireo).